We begin with the raw amino-acid sequence, 458 residues long: Adenylosuccinate synthetase (458 aa).

Residues 17–23 (GDEGKGK) and 45–47 (GHT) each bind GTP. The active-site Proton acceptor is aspartate 18. Mg(2+) contacts are provided by aspartate 18 and glycine 45. IMP is bound by residues 18–21 (DEGK), 43–46 (NAGH), threonine 137, arginine 151, glutamine 247, threonine 262, and arginine 330. Histidine 46 functions as the Proton donor in the catalytic mechanism. 326–332 (VTTGRSR) lines the substrate pocket. GTP-binding positions include arginine 332, 358-360 (KLD), and 440-442 (STG).

It belongs to the adenylosuccinate synthetase family. Homodimer. It depends on Mg(2+) as a cofactor.

It is found in the cytoplasm. The enzyme catalyses IMP + L-aspartate + GTP = N(6)-(1,2-dicarboxyethyl)-AMP + GDP + phosphate + 2 H(+). The protein operates within purine metabolism; AMP biosynthesis via de novo pathway; AMP from IMP: step 1/2. Plays an important role in the de novo pathway of purine nucleotide biosynthesis. Catalyzes the first committed step in the biosynthesis of AMP from IMP. The chain is Adenylosuccinate synthetase from Albidiferax ferrireducens (strain ATCC BAA-621 / DSM 15236 / T118) (Rhodoferax ferrireducens).